The sequence spans 301 residues: Probable alpha-L-glutamate ligase (301 aa).

Positions 104 to 287 (LQLLARKGVG…VAGMIINWTE (184 aa)) constitute an ATP-grasp domain. Residues K141, 178-179 (EF), D187, and 211-213 (RSN) contribute to the ATP site. D248, E260, and N262 together coordinate Mg(2+). Residues D248, E260, and N262 each coordinate Mn(2+).

Belongs to the RimK family. Mg(2+) serves as cofactor. Requires Mn(2+) as cofactor.

This is Probable alpha-L-glutamate ligase from Marinobacter nauticus (strain ATCC 700491 / DSM 11845 / VT8) (Marinobacter aquaeolei).